Reading from the N-terminus, the 322-residue chain is Zinc finger C2HC domain-containing protein CBG14627 (322 aa).

2 consecutive C2HC/C3H-type zinc fingers follow at residues 9 to 38 and 119 to 148; these read PVYPCPICGRKFVKSSLEKHESACRKLATL and DYVQCEYCSRNFNAAAAERHIPFCREQTTR. 8 residues coordinate Zn(2+): Cys-13, Cys-16, His-28, Cys-32, Cys-123, Cys-126, His-138, and Cys-142. The segment at 144–322 is disordered; sequence EQTTRKQGGK…SRNNSRSRIF (179 aa). Residues 148 to 168 are compositionally biased toward polar residues; it reads RKQGGKSSAGNRGLTSNNYRS. The segment covering 171-219 has biased composition (basic and acidic residues); that stretch reads SKHEGRKQESSSRNGSAERKTTTRGRDGSLSRARRDDSNDLTNRRKSLE. A compositionally biased stretch (polar residues) spans 220–238; that stretch reads TRSQLTTGQANNRTTSLSA. A compositionally biased stretch (low complexity) spans 278 to 294; that stretch reads TTTTASASRSGSGSSSR. The span at 296 to 305 shows a compositional bias: basic and acidic residues; it reads RTRDESRESR. The span at 311–322 shows a compositional bias: low complexity; that stretch reads SNSRNNSRSRIF.

The protein belongs to the ZC2HC1 family. Zn(2+) serves as cofactor.

The polypeptide is Zinc finger C2HC domain-containing protein CBG14627 (Caenorhabditis briggsae).